The primary structure comprises 96 residues: Phosphoribosyl-ATP pyrophosphatase (96 aa).

It belongs to the PRA-PH family.

It localises to the cytoplasm. The enzyme catalyses 1-(5-phospho-beta-D-ribosyl)-ATP + H2O = 1-(5-phospho-beta-D-ribosyl)-5'-AMP + diphosphate + H(+). The protein operates within amino-acid biosynthesis; L-histidine biosynthesis; L-histidine from 5-phospho-alpha-D-ribose 1-diphosphate: step 2/9. The chain is Phosphoribosyl-ATP pyrophosphatase from Methanococcus maripaludis (strain DSM 14266 / JCM 13030 / NBRC 101832 / S2 / LL).